The chain runs to 124 residues: MAIAKEDILAAVEGMTVLELNELVKAFEEKFGVSAAAVAVAGPAAGGAAAAAEEKTEFTVVLAEAGSNKVAVIKAVRELTGLGLKEAKDLVDGAPKPVKEGVDKAAADEAKKKLEDAGAKVEVK.

It belongs to the bacterial ribosomal protein bL12 family. Homodimer. Part of the ribosomal stalk of the 50S ribosomal subunit. Forms a multimeric L10(L12)X complex, where L10 forms an elongated spine to which 2 to 4 L12 dimers bind in a sequential fashion. Binds GTP-bound translation factors.

In terms of biological role, forms part of the ribosomal stalk which helps the ribosome interact with GTP-bound translation factors. Is thus essential for accurate translation. In Burkholderia thailandensis (strain ATCC 700388 / DSM 13276 / CCUG 48851 / CIP 106301 / E264), this protein is Large ribosomal subunit protein bL12.